Consider the following 632-residue polypeptide: Phosphatidylinositol 3,4,5-trisphosphate 3-phosphatase and protein-tyrosine-phosphatase PTEN2B (632 aa).

The span at 1-12 (METDPANSSSKS) shows a compositional bias: polar residues. Residues 1-98 (METDPANSSS…RESPPSIFSS (98 aa)) form a disordered region. Residues 39–48 (SAEREAHEDS) show a composition bias toward basic and acidic residues. The span at 63–73 (MPASSTGSEPL) shows a compositional bias: polar residues. Positions 87-98 (SPRESPPSIFSS) are enriched in low complexity. One can recognise a Phosphatase tensin-type domain in the interval 189-368 (RRYQEGEFDL…KYYERVQNQF (180 aa)). Residue C307 is the Phosphocysteine intermediate of the active site. In terms of domain architecture, C2 tensin-type spans 375-502 (ERRCMLRGFR…FHVEIVMIEP (128 aa)). Positions 504–603 (NSQPTKSKSD…SGHYNPIPNN (100 aa)) are disordered. The segment covering 505-527 (SQPTKSKSDSTQQQSQSSSSADS) has biased composition (low complexity). The span at 535 to 549 (KDDDVFSDSDGEEEG) shows a compositional bias: acidic residues. At S541 the chain carries Phosphoserine. Positions 550–571 (NSQSYSTNEKTASSMHTTSKPH) are enriched in polar residues. Low complexity predominate over residues 584–594 (ANRSVTSSSSS).

It belongs to the PTEN phosphatase protein family. As to expression, expressed, at low levels, in seedlings, roots, stems, leaves, flowers and siliques. However, at protein level, not observed in older leaves, flowers and siliques.

The enzyme catalyses O-phospho-L-tyrosyl-[protein] + H2O = L-tyrosyl-[protein] + phosphate. It carries out the reaction a 1,2-diacyl-sn-glycero-3-phospho-(1D-myo-inositol-3,4,5-trisphosphate) + H2O = a 1,2-diacyl-sn-glycero-3-phospho-(1D-myo-inositol-4,5-bisphosphate) + phosphate. Its function is as follows. Protein tyrosine phosphatase that also exhibits a weak lipid phosphatase activity towards PtdIns(3)P. The sequence is that of Phosphatidylinositol 3,4,5-trisphosphate 3-phosphatase and protein-tyrosine-phosphatase PTEN2B from Arabidopsis thaliana (Mouse-ear cress).